The sequence spans 343 residues: GTPase Obg (343 aa).

The Obg domain maps to 1 to 159 (MKFLDQAKVY…LNIWLRLKLI (159 aa)). The OBG-type G domain maps to 160–327 (ADAGLVGLPN…VLRALMTVIA (168 aa)). GTP contacts are provided by residues 166-173 (GLPNAGKS), 191-195 (FTTLH), 212-215 (DIPG), 279-282 (SQVD), and 308-310 (SAV). Mg(2+) is bound by residues S173 and T193.

This sequence belongs to the TRAFAC class OBG-HflX-like GTPase superfamily. OBG GTPase family. Monomer. Mg(2+) serves as cofactor.

The protein resides in the cytoplasm. An essential GTPase which binds GTP, GDP and possibly (p)ppGpp with moderate affinity, with high nucleotide exchange rates and a fairly low GTP hydrolysis rate. Plays a role in control of the cell cycle, stress response, ribosome biogenesis and in those bacteria that undergo differentiation, in morphogenesis control. The polypeptide is GTPase Obg (Mesorhizobium japonicum (strain LMG 29417 / CECT 9101 / MAFF 303099) (Mesorhizobium loti (strain MAFF 303099))).